Consider the following 432-residue polypeptide: Adenosylhomocysteinase (432 aa).

Positions 56, 131, and 156 each coordinate substrate. Position 157–159 (157–159 (TTT)) interacts with NAD(+). Substrate-binding residues include lysine 186 and aspartate 190. NAD(+)-binding positions include 222–227 (GDVGKG), glutamate 243, asparagine 248, 299–301 (IGH), asparagine 346, histidine 353, lysine 426, 426–430 (KPDHY), and tyrosine 430.

This sequence belongs to the adenosylhomocysteinase family. In terms of assembly, interacts with AhcyL1; the interaction may negatively regulate Ahcy catalytic activity. NAD(+) is required as a cofactor.

The enzyme catalyses S-adenosyl-L-homocysteine + H2O = L-homocysteine + adenosine. Its pathway is amino-acid biosynthesis; L-homocysteine biosynthesis; L-homocysteine from S-adenosyl-L-homocysteine: step 1/1. Functionally, adenosylhomocysteine is a competitive inhibitor of S-adenosyl-L-methionine-dependent methyl transferase reactions; therefore adenosylhomocysteinase may play a key role in the control of methylations via regulation of the intracellular concentration of adenosylhomocysteine. This chain is Adenosylhomocysteinase, found in Drosophila melanogaster (Fruit fly).